A 416-amino-acid chain; its full sequence is Hepatic and glial cell adhesion molecule (416 aa).

The first 33 residues, 1 to 33 (MKRERGALSRASRALRLAPFVYLLLIQTDPLEG), serve as a signal peptide directing secretion. The Ig-like V-type domain occupies 34–142 (VNITSPVRLI…GEKTINLTVD (109 aa)). Residues 34 to 240 (VNITSPVRLI…VKITVYRRSS (207 aa)) are Extracellular-facing. 4 N-linked (GlcNAc...) asparagine glycosylation sites follow: asparagine 35, asparagine 138, asparagine 167, and asparagine 189. Residues 148–234 (PQVLVASTTV…QGRSLPVKIT (87 aa)) enclose the Ig-like C2-type domain. Cysteine 168 and cysteine 217 are oxidised to a cystine. Residues 241–261 (LYIILSTGGIFLLVTLVTVCA) form a helical membrane-spanning segment. Residues 262–416 (CWKPSKRKQK…DEAGPVEISA (155 aa)) are Cytoplasmic-facing. The interval 273-416 (LEKQNSLEYM…DEAGPVEISA (144 aa)) is disordered. Phosphoserine is present on serine 278. The span at 285–306 (NDDRLKPEADTLPRSGEQERKN) shows a compositional bias: basic and acidic residues. Phosphoserine occurs at positions 350 and 377. The segment covering 383–398 (SSPGRSRSASRTLRTA) has biased composition (low complexity).

As to quaternary structure, homodimer. Dimer formation occurs predominantly through cis interactions on the cell surface. Part of a complex containing MLC1, TRPV4, AQP4 and ATP1B1. Interacts with CLCN2. In terms of processing, N-glycosylated.

The protein localises to the cytoplasm. Its subcellular location is the cell membrane. In terms of biological role, involved in regulating cell motility and cell-matrix interactions. May inhibit cell growth through suppression of cell proliferation. In glia, associates and targets CLCN2 at astrocytic processes and myelinated fiber tracts where it may regulate transcellular chloride flux involved in neuron excitability. The sequence is that of Hepatic and glial cell adhesion molecule from Homo sapiens (Human).